We begin with the raw amino-acid sequence, 341 residues long: Phosphoribosylformylglycinamidine cyclo-ligase (341 aa).

The protein belongs to the AIR synthase family.

The protein localises to the cytoplasm. It carries out the reaction 2-formamido-N(1)-(5-O-phospho-beta-D-ribosyl)acetamidine + ATP = 5-amino-1-(5-phospho-beta-D-ribosyl)imidazole + ADP + phosphate + H(+). It participates in purine metabolism; IMP biosynthesis via de novo pathway; 5-amino-1-(5-phospho-D-ribosyl)imidazole from N(2)-formyl-N(1)-(5-phospho-D-ribosyl)glycinamide: step 2/2. This chain is Phosphoribosylformylglycinamidine cyclo-ligase, found in Finegoldia magna (strain ATCC 29328 / DSM 20472 / WAL 2508) (Peptostreptococcus magnus).